The chain runs to 301 residues: tRNA dimethylallyltransferase (301 aa).

9–16 (GPTASGKS) serves as a coordination point for ATP. 11–16 (TASGKS) provides a ligand contact to substrate. Residues 34–37 (DSMQ) form an interaction with substrate tRNA region.

This sequence belongs to the IPP transferase family. Monomer. Requires Mg(2+) as cofactor.

It catalyses the reaction adenosine(37) in tRNA + dimethylallyl diphosphate = N(6)-dimethylallyladenosine(37) in tRNA + diphosphate. In terms of biological role, catalyzes the transfer of a dimethylallyl group onto the adenine at position 37 in tRNAs that read codons beginning with uridine, leading to the formation of N6-(dimethylallyl)adenosine (i(6)A). In Corynebacterium glutamicum (strain R), this protein is tRNA dimethylallyltransferase.